Consider the following 230-residue polypeptide: MSENKQLMKNGMWSNNPALVQLLGLCPLLAVSSTITNALGLGIATLLVLVGSNVTVSLIRNYVPKEIRIPVFVMIIASLVTCVQLLMNAYAYGLYLSLGIFIPLIVTNCIIIGRAEAYASKNDVLPAALDGLWMGLGMTSVLVVLGSMRELIGNGTLFDGADLLLGDWAAALRIQVFQFDSSFLLALLPPGAFIGVGLLIALKNVIDSSIQARQPKEEKPAIERARVTNA.

Transmembrane regions (helical) follow at residues 18 to 38 (ALVQLLGLCPLLAVSSTITNA), 39 to 59 (LGLGIATLLVLVGSNVTVSLI), 69 to 89 (IPVFVMIIASLVTCVQLLMNA), 93 to 113 (GLYLSLGIFIPLIVTNCIIIG), 124 to 144 (VLPAALDGLWMGLGMTSVLVV), and 182 to 202 (SFLLALLPPGAFIGVGLLIAL).

It belongs to the NqrDE/RnfAE family. The complex is composed of six subunits: RnfA, RnfB, RnfC, RnfD, RnfE and RnfG.

It localises to the cell inner membrane. In terms of biological role, part of a membrane-bound complex that couples electron transfer with translocation of ions across the membrane. The polypeptide is Ion-translocating oxidoreductase complex subunit E (Vibrio parahaemolyticus serotype O3:K6 (strain RIMD 2210633)).